Here is a 654-residue protein sequence, read N- to C-terminus: Probable Xaa-Pro aminopeptidase P (654 aa).

Positions 449, 460, 558, and 572 each coordinate Mn(2+).

Belongs to the peptidase M24B family. It depends on Mn(2+) as a cofactor.

The enzyme catalyses Release of any N-terminal amino acid, including proline, that is linked to proline, even from a dipeptide or tripeptide.. Its function is as follows. Catalyzes the removal of a penultimate prolyl residue from the N-termini of peptides. This Aspergillus fumigatus (strain CBS 144.89 / FGSC A1163 / CEA10) (Neosartorya fumigata) protein is Probable Xaa-Pro aminopeptidase P (ampp).